We begin with the raw amino-acid sequence, 117 residues long: Fluoride-specific ion channel FluC 2 (117 aa).

Transmembrane regions (helical) follow at residues M1–I21, I33–G53, M61–S81, and I94–G114. Na(+) is bound by residues G71 and T74.

Belongs to the fluoride channel Fluc/FEX (TC 1.A.43) family.

Its subcellular location is the cell membrane. It carries out the reaction fluoride(in) = fluoride(out). Its activity is regulated as follows. Na(+) is not transported, but it plays an essential structural role and its presence is essential for fluoride channel function. Its function is as follows. Fluoride-specific ion channel. Important for reducing fluoride concentration in the cell, thus reducing its toxicity. This Staphylococcus epidermidis (strain ATCC 35984 / DSM 28319 / BCRC 17069 / CCUG 31568 / BM 3577 / RP62A) protein is Fluoride-specific ion channel FluC 2.